Here is a 547-residue protein sequence, read N- to C-terminus: CDK5RAP1-like protein (547 aa).

An MTTase N-terminal domain is found at 79–194 (RTVCYVTYGC…LPRLVAVAAG (116 aa)). Residues C88, C124, C157, C232, C236, and C239 each coordinate [4Fe-4S] cluster. Positions 218–475 (DSASKTAFIS…TTVFREEALK (258 aa)) constitute a Radical SAM core domain. The 66-residue stretch at 478–543 (QALIGSEQTV…SQTLKAQLIG (66 aa)) folds into the TRAM domain.

This sequence belongs to the methylthiotransferase family. MiaB subfamily. The cofactor is [4Fe-4S] cluster.

Potential regulator of CDK5 activity. The polypeptide is CDK5RAP1-like protein (Caenorhabditis elegans).